The sequence spans 258 residues: Putative [LysW]-aminoadipate/[LysW]-glutamate kinase (258 aa).

Substrate is bound by residues 33–34, arginine 60, and asparagine 164; that span reads GG.

This sequence belongs to the acetylglutamate kinase family. LysZ subfamily.

The protein localises to the cytoplasm. It catalyses the reaction [amino-group carrier protein]-C-terminal-N-(1,4-dicarboxybutan-1-yl)-L-glutamine + ATP = [amino-group carrier protein]-C-terminal-N-(1-carboxy-5-phosphooxy-5-oxopentan-1-yl)-L-glutamine + ADP. The catalysed reaction is [amino-group carrier protein]-C-terminal-gamma-(L-glutamyl)-L-glutamate + ATP = [amino-group carrier protein]-C-terminal-gamma-(5-phospho-L-glutamyl)-L-glutamate + ADP. It participates in amino-acid biosynthesis; L-lysine biosynthesis via AAA pathway; L-lysine from L-alpha-aminoadipate (Thermus route): step 2/5. It functions in the pathway amino-acid biosynthesis; L-arginine biosynthesis. Its function is as follows. Involved in both the arginine and lysine biosynthetic pathways. Phosphorylates the LysW-bound precursors glutamate (for arginine biosynthesis), respectively alpha-aminoadipate (for lysine biosynthesis). This Caldivirga maquilingensis (strain ATCC 700844 / DSM 13496 / JCM 10307 / IC-167) protein is Putative [LysW]-aminoadipate/[LysW]-glutamate kinase.